The primary structure comprises 501 residues: L-arabinose isomerase (501 aa).

The Mn(2+) site is built by glutamate 306, glutamate 333, histidine 350, and histidine 450.

It belongs to the arabinose isomerase family. In terms of assembly, homohexamer. It depends on Mn(2+) as a cofactor.

The enzyme catalyses beta-L-arabinopyranose = L-ribulose. The protein operates within carbohydrate degradation; L-arabinose degradation via L-ribulose; D-xylulose 5-phosphate from L-arabinose (bacterial route): step 1/3. Catalyzes the conversion of L-arabinose to L-ribulose. This is L-arabinose isomerase from Erwinia tasmaniensis (strain DSM 17950 / CFBP 7177 / CIP 109463 / NCPPB 4357 / Et1/99).